The primary structure comprises 29 residues: Cyclotide mden-A (29 aa).

A cross-link (cyclopeptide (Gly-Asn)) is located at residues 1–29; sequence GIPTCGETCTLGTCNTPGCTCSWPICTKN. 3 disulfide bridges follow: Cys-5–Cys-19, Cys-9–Cys-21, and Cys-14–Cys-26.

The protein belongs to the cyclotide family. Moebius subfamily. In terms of processing, this is a cyclic peptide.

Probably participates in a plant defense mechanism. This is Cyclotide mden-A from Melicytus dentatus (Tree violet).